The chain runs to 208 residues: Anthranilate synthase component 2 (208 aa).

Residues 3 to 208 (HVVLIDNHDS…SRCVEQLLAN (206 aa)) form the Glutamine amidotransferase type-1 domain. 53–55 (GPG) contacts L-glutamine. The active-site Nucleophile; for GATase activity is cysteine 80. L-glutamine contacts are provided by residues glutamine 84 and 145–146 (SL). Catalysis depends on for GATase activity residues histidine 185 and glutamate 187.

As to quaternary structure, heterotetramer consisting of two non-identical subunits: a beta subunit (TrpG) and a large alpha subunit (TrpE).

It catalyses the reaction chorismate + L-glutamine = anthranilate + pyruvate + L-glutamate + H(+). The protein operates within amino-acid biosynthesis; L-tryptophan biosynthesis; L-tryptophan from chorismate: step 1/5. In terms of biological role, part of a heterotetrameric complex that catalyzes the two-step biosynthesis of anthranilate, an intermediate in the biosynthesis of L-tryptophan. In the first step, the glutamine-binding beta subunit (TrpG) of anthranilate synthase (AS) provides the glutamine amidotransferase activity which generates ammonia as a substrate that, along with chorismate, is used in the second step, catalyzed by the large alpha subunit of AS (TrpE) to produce anthranilate. In the absence of TrpG, TrpE can synthesize anthranilate directly from chorismate and high concentrations of ammonia. The chain is Anthranilate synthase component 2 (trpG) from Corynebacterium glutamicum (strain ATCC 13032 / DSM 20300 / JCM 1318 / BCRC 11384 / CCUG 27702 / LMG 3730 / NBRC 12168 / NCIMB 10025 / NRRL B-2784 / 534).